Reading from the N-terminus, the 445-residue chain is tRNA modification GTPase MnmE (445 aa).

Residues Arg-25, Glu-83, and Lys-121 each contribute to the (6S)-5-formyl-5,6,7,8-tetrahydrofolate site. One can recognise a TrmE-type G domain in the interval 217–371; that stretch reads GVRVVILGPP…LLTLIQEKSR (155 aa). GTP is bound by residues 227–232, 246–252, and 271–274; these read NAGKST, SEHPGTT, and DTAG. Ser-231 and Thr-252 together coordinate Mg(2+). (6S)-5-formyl-5,6,7,8-tetrahydrofolate is bound at residue Lys-445.

This sequence belongs to the TRAFAC class TrmE-Era-EngA-EngB-Septin-like GTPase superfamily. TrmE GTPase family. Homodimer. Heterotetramer of two MnmE and two MnmG subunits. It depends on K(+) as a cofactor.

The protein resides in the cytoplasm. Exhibits a very high intrinsic GTPase hydrolysis rate. Involved in the addition of a carboxymethylaminomethyl (cmnm) group at the wobble position (U34) of certain tRNAs, forming tRNA-cmnm(5)s(2)U34. This chain is tRNA modification GTPase MnmE, found in Anaplasma phagocytophilum (strain HZ).